The primary structure comprises 428 residues: Histidine--tRNA ligase (428 aa).

This sequence belongs to the class-II aminoacyl-tRNA synthetase family.

The protein localises to the cytoplasm. It carries out the reaction tRNA(His) + L-histidine + ATP = L-histidyl-tRNA(His) + AMP + diphosphate + H(+). This is Histidine--tRNA ligase from Korarchaeum cryptofilum (strain OPF8).